A 212-amino-acid chain; its full sequence is MDKFVRLEGLVAPLDRSNVDTDAIIPKQFLKSIKRSGFGPNAFDEWRYMDVGQPGQDNTGRPKNPNFVLNQPRYQGAEVLLTRANFGCGSSREHAPWALLDFGFKAIIAESFADIFFNNCFKNGILPIVLPAAEIEALFQQVEATPGYKLVVDLSAQAVVRPDGHGIPFQIDAFRKECLLNGWDDIGLTLRHAEKIREFEAKRRVDQPWLFS.

Belongs to the LeuD family. LeuD type 1 subfamily. Heterodimer of LeuC and LeuD.

The catalysed reaction is (2R,3S)-3-isopropylmalate = (2S)-2-isopropylmalate. Its pathway is amino-acid biosynthesis; L-leucine biosynthesis; L-leucine from 3-methyl-2-oxobutanoate: step 2/4. Functionally, catalyzes the isomerization between 2-isopropylmalate and 3-isopropylmalate, via the formation of 2-isopropylmaleate. The chain is 3-isopropylmalate dehydratase small subunit from Dechloromonas aromatica (strain RCB).